A 194-amino-acid chain; its full sequence is Putative 3-methyladenine DNA glycosylase (194 aa).

The protein belongs to the DNA glycosylase MPG family.

In Aeropyrum pernix (strain ATCC 700893 / DSM 11879 / JCM 9820 / NBRC 100138 / K1), this protein is Putative 3-methyladenine DNA glycosylase.